Reading from the N-terminus, the 494-residue chain is MHFVPTMGGLHHGHASLISAASCHKSGDVETLVSVFVNPLQFGPNEDFARYPRTFEADCELAELSGASAIWCPDESQIYPGGSAESWRIQAPKSLQSRLCGSTRPGHFDGVVTVVCRLLALAKPHQLFLGEKDWQQLTILRRMVLDLGLAVRVRGVPTVRDGDGLASSSRNRYLNAQQRQQGVLFAQVLSDARSACLHGGTALKPGEVKRRLEEVGLSVEYVDVVDPWFLQPSKSNQSSLTLLAAAVRCGSTRLIDHAFLMTRSPLVAIDGPAGAGKSTVTRAFAERLGLVYLDTGAMYRAVTWLVLEQGGDPGDSEAVDLVLNDLKVELEPLQQGVQVVRVNGHEVTDAIRDPRVTASVSAVASHACVRAAMTAQQQRMGKAGGLVAEGRDIGTAVFPDAELKVFLTATPKERARRRALDLEARGHEVPALPELEAQIVERDRLDSTREVAPLLQADDAIELISDGMSIDQVIDALEDLFRRRVGEEVWPTPV.

Residues 1 to 258 form a pantoate--beta-alanine ligase region; it reads MHFVPTMGGL…CGSTRLIDHA (258 aa). 7–14 is an ATP binding site; that stretch reads MGGLHHGH. His-14 functions as the Proton donor in the catalytic mechanism. Gln-41 contributes to the (R)-pantoate binding site. Gln-41 is a beta-alanine binding site. 130 to 133 contacts ATP; sequence GEKD. Gln-136 contacts (R)-pantoate. Residues Val-159 and 167–170 each bind ATP; that span reads SSSR. Residues 259 to 494 are cytidylate kinase; that stretch reads FLMTRSPLVA…VGEEVWPTPV (236 aa).

This sequence in the N-terminal section; belongs to the pantothenate synthetase family. It in the C-terminal section; belongs to the cytidylate kinase family. Type 1 subfamily.

It localises to the cytoplasm. It catalyses the reaction (R)-pantoate + beta-alanine + ATP = (R)-pantothenate + AMP + diphosphate + H(+). The catalysed reaction is CMP + ATP = CDP + ADP. It carries out the reaction dCMP + ATP = dCDP + ADP. It participates in cofactor biosynthesis; (R)-pantothenate biosynthesis; (R)-pantothenate from (R)-pantoate and beta-alanine: step 1/1. Functionally, catalyzes the condensation of pantoate with beta-alanine in an ATP-dependent reaction via a pantoyl-adenylate intermediate. In terms of biological role, catalyzes the transfer of a phosphate group from ATP to either CMP or dCMP to form CDP or dCDP and ADP, respectively. The chain is Bifunctional pantoate ligase/cytidylate kinase from Synechococcus sp. (strain CC9311).